A 141-amino-acid polypeptide reads, in one-letter code: ATP synthase epsilon chain (141 aa).

The protein belongs to the ATPase epsilon chain family. F-type ATPases have 2 components, CF(1) - the catalytic core - and CF(0) - the membrane proton channel. CF(1) has five subunits: alpha(3), beta(3), gamma(1), delta(1), epsilon(1). CF(0) has three main subunits: a, b and c.

It is found in the cell inner membrane. Functionally, produces ATP from ADP in the presence of a proton gradient across the membrane. The chain is ATP synthase epsilon chain (atpC) from Acidithiobacillus ferridurans.